Consider the following 517-residue polypeptide: Ribonuclease Y (517 aa).

The helical transmembrane segment at M1–V21 threads the bilayer. The region spanning L207–D273 is the KH domain. Residues A333–A426 form the HD domain.

It belongs to the RNase Y family.

The protein resides in the cell membrane. Its function is as follows. Endoribonuclease that initiates mRNA decay. This is Ribonuclease Y from Campylobacter jejuni subsp. jejuni serotype O:23/36 (strain 81-176).